Here is a 455-residue protein sequence, read N- to C-terminus: Glutamyl-tRNA reductase (455 aa).

Substrate is bound by residues 49-52 (TCNR), Ser-109, 114-116 (ETQ), and Gln-120. Cys-50 functions as the Nucleophile in the catalytic mechanism. Residue 189–194 (GAGKMG) coordinates NADP(+).

The protein belongs to the glutamyl-tRNA reductase family. In terms of assembly, homodimer.

The enzyme catalyses (S)-4-amino-5-oxopentanoate + tRNA(Glu) + NADP(+) = L-glutamyl-tRNA(Glu) + NADPH + H(+). It participates in porphyrin-containing compound metabolism; protoporphyrin-IX biosynthesis; 5-aminolevulinate from L-glutamyl-tRNA(Glu): step 1/2. Functionally, catalyzes the NADPH-dependent reduction of glutamyl-tRNA(Glu) to glutamate 1-semialdehyde (GSA). The protein is Glutamyl-tRNA reductase of Bacillus pumilus (strain SAFR-032).